Here is a 125-residue protein sequence, read N- to C-terminus: Small ribosomal subunit protein uS12 (125 aa).

At Asp89 the chain carries 3-methylthioaspartic acid.

This sequence belongs to the universal ribosomal protein uS12 family. In terms of assembly, part of the 30S ribosomal subunit. Contacts proteins S8 and S17. May interact with IF1 in the 30S initiation complex.

Functionally, with S4 and S5 plays an important role in translational accuracy. Interacts with and stabilizes bases of the 16S rRNA that are involved in tRNA selection in the A site and with the mRNA backbone. Located at the interface of the 30S and 50S subunits, it traverses the body of the 30S subunit contacting proteins on the other side and probably holding the rRNA structure together. The combined cluster of proteins S8, S12 and S17 appears to hold together the shoulder and platform of the 30S subunit. The chain is Small ribosomal subunit protein uS12 from Clostridium acetobutylicum (strain ATCC 824 / DSM 792 / JCM 1419 / IAM 19013 / LMG 5710 / NBRC 13948 / NRRL B-527 / VKM B-1787 / 2291 / W).